Here is a 192-residue protein sequence, read N- to C-terminus: Vascular endothelial growth factor A (192 aa).

Positions 1-26 (MNFLLTWIHWGLAALLYFHNAKVLQA) are cleaved as a signal peptide. Cystine bridges form between C52–C94, C83–C128, and C87–C130. N-linked (GlcNAc...) asparagine glycosylation occurs at N101.

Belongs to the PDGF/VEGF growth factor family. Homodimer; disulfide-linked. Also found as heterodimer with PGF. Interacts with FLT1/VEGFR1 and KDR/VEGFR2 receptors, heparan sulfate and heparin. Expressed by the venom gland, and probably other tissues.

The protein resides in the secreted. Its function is as follows. Growth factor active in angiogenesis, vasculogenesis and endothelial cell growth. Induces endothelial cell proliferation, promotes cell migration, inhibits apoptosis and induces permeabilization of blood vessels. In Agkistrodon piscivorus piscivorus (Eastern cottonmouth), this protein is Vascular endothelial growth factor A.